The chain runs to 53 residues: uncharacterized protein (53 aa).

Positions 1–23 are cleaved as a signal peptide; sequence MSILLKILFKLLLLILSITFVIT.

This is an uncharacterized protein from Acheta domesticus (House cricket).